A 506-amino-acid chain; its full sequence is Tabersonine 6,7-epoxidase isoform 1 (506 aa).

Residues 1-21 (MEFVVSLFAFVVSCFILLKVA) form a helical membrane-spanning segment. N173 and N261 each carry an N-linked (GlcNAc...) asparagine glycan. Position 441 (C441) interacts with heme.

This sequence belongs to the cytochrome P450 family. It depends on heme as a cofactor. As to expression, mainly expressed in roots.

It localises to the endoplasmic reticulum membrane. The enzyme catalyses (-)-tabersonine + reduced [NADPH--hemoprotein reductase] + O2 = lochnericine + oxidized [NADPH--hemoprotein reductase] + H2O + H(+). It functions in the pathway alkaloid biosynthesis. In terms of biological role, component of the monoterpenoid indole alkaloids (MIAs, e.g. echitovenine, tabersonine, lochnericine, 19-hydroxytabersonine and horhammericine) biosynthetic pathway; MIAs are used in cancer treatment and other medical applications. Cytochrome P450 catalyzing the conversion of tabersonine to lochnericine. The chain is Tabersonine 6,7-epoxidase isoform 1 from Catharanthus roseus (Madagascar periwinkle).